The chain runs to 161 residues: MDKEVEVPPAGDSPTCIEAIDVMRIMEAIPHRYPFLLIDRMVDIVLGSSAVGIKNVTASEPHFQGHFPARPVMPGVLIIEAMAQTAATLVVLTLGPAFEGKLVYFMTIDGAKFRRPVGPGDQLRIHVEKERSRANVWKFKGIARVDGVSVAEATFSAMIMG.

His-66 is an active-site residue.

The protein belongs to the thioester dehydratase family. FabZ subfamily.

The protein resides in the cytoplasm. The enzyme catalyses a (3R)-hydroxyacyl-[ACP] = a (2E)-enoyl-[ACP] + H2O. Its function is as follows. Involved in unsaturated fatty acids biosynthesis. Catalyzes the dehydration of short chain beta-hydroxyacyl-ACPs and long chain saturated and unsaturated beta-hydroxyacyl-ACPs. This chain is 3-hydroxyacyl-[acyl-carrier-protein] dehydratase FabZ, found in Gluconacetobacter diazotrophicus (strain ATCC 49037 / DSM 5601 / CCUG 37298 / CIP 103539 / LMG 7603 / PAl5).